The sequence spans 200 residues: 3-isopropylmalate dehydratase small subunit (200 aa).

It belongs to the LeuD family. LeuD type 1 subfamily. Heterodimer of LeuC and LeuD.

The catalysed reaction is (2R,3S)-3-isopropylmalate = (2S)-2-isopropylmalate. The protein operates within amino-acid biosynthesis; L-leucine biosynthesis; L-leucine from 3-methyl-2-oxobutanoate: step 2/4. Catalyzes the isomerization between 2-isopropylmalate and 3-isopropylmalate, via the formation of 2-isopropylmaleate. This Yersinia pseudotuberculosis serotype I (strain IP32953) protein is 3-isopropylmalate dehydratase small subunit.